Here is a 429-residue protein sequence, read N- to C-terminus: Glutamate-1-semialdehyde 2,1-aminomutase 2 (429 aa).

N6-(pyridoxal phosphate)lysine is present on Lys-268.

The protein belongs to the class-III pyridoxal-phosphate-dependent aminotransferase family. HemL subfamily. As to quaternary structure, homodimer. Pyridoxal 5'-phosphate serves as cofactor.

The protein localises to the cytoplasm. The catalysed reaction is (S)-4-amino-5-oxopentanoate = 5-aminolevulinate. It participates in porphyrin-containing compound metabolism; protoporphyrin-IX biosynthesis; 5-aminolevulinate from L-glutamyl-tRNA(Glu): step 2/2. This is Glutamate-1-semialdehyde 2,1-aminomutase 2 from Bacillus cereus (strain AH820).